A 727-amino-acid polypeptide reads, in one-letter code: UvrABC system protein C (727 aa).

The GIY-YIG domain occupies 16–95 (VDPGVYKFRD…IKEFDPRFNV (80 aa)). The UVR domain maps to 208 to 243 (DRLVRQLEARMQEASEELDFETAARLRDDVGALRRA). 2 disordered regions span residues 503–527 (DADQ…QTGR) and 679–727 (SADV…TGVE). Over residues 701–711 (NGADIPREPVE) the composition is skewed to basic and acidic residues. A compositionally biased stretch (polar residues) spans 718–727 (QSASQRTGVE).

Belongs to the UvrC family. In terms of assembly, interacts with UvrB in an incision complex.

The protein localises to the cytoplasm. Its function is as follows. The UvrABC repair system catalyzes the recognition and processing of DNA lesions. UvrC both incises the 5' and 3' sides of the lesion. The N-terminal half is responsible for the 3' incision and the C-terminal half is responsible for the 5' incision. In Rhodococcus jostii (strain RHA1), this protein is UvrABC system protein C.